A 678-amino-acid polypeptide reads, in one-letter code: Sulfoquinovosidase (678 aa).

Gln288, Arg301, Val302, and Trp304 together coordinate a 6-sulfo-alpha-D-quinovosyldiacylglycerol. Asp405 (nucleophile) is an active-site residue. Residue Glu408 is part of the active site. Asp472 serves as the catalytic Proton donor. His537 is a binding site for a 6-sulfo-alpha-D-quinovosyldiacylglycerol.

The protein belongs to the glycosyl hydrolase 31 family.

It catalyses the reaction a 6-sulfo-alpha-D-quinovosyldiacylglycerol + H2O = 6-sulfo-alpha-D-quinovose + a 1,2-diacyl-sn-glycerol. It carries out the reaction 3-(6-sulfo-alpha-D-quinovosyl)glycerol + H2O = 6-sulfo-alpha-D-quinovose + glycerol. Its pathway is glycolipid metabolism. Is inactivated in vitro by the mechanism-based inactivator 5-fluoro-beta-L-idopyranosyl fluoride (5FIdoF) that yields a covalent glycosyl-enzyme complex with the active site nucleophile Asp-405. Its function is as follows. Catalyzes the hydrolysis of sulfoquinovosyl diacylglycerides (SQDG) to sulfoquinovose (SQ), which is then degraded by E.coli through the SQ Embden-Meyerhof-Parnas (SQ-EMP) sulfoglycolysis pathway as a source of carbon and sulfur. Therefore, is likely involved in the utilization of the sulfoquinovose headgroup found in ubiquitous plant sulfolipids. Is also able to hydrolyze simple sulfoquinovosides such as sulfoquinovosyl glycerol (SQGro). In vitro, can use the substrate analog para-nitrophenyl alpha-sulfoquinovoside (PNPSQ), but shows no detectable activity toward 4-nitrophenyl alpha-D-glucopyranoside (PNPGlc). Is a retaining glycoside hydrolase, since it forms the alpha anomer of SQ. Also exhibits some alpha-glucosidase activity against alpha-glucosyl fluoride in vitro, although natural substrates, such as alpha-glucobioses are scarcely hydrolyzed. This is Sulfoquinovosidase from Escherichia coli (strain K12).